A 161-amino-acid polypeptide reads, in one-letter code: Non-secretory ribonuclease (161 aa).

An N-terminal signal peptide occupies residues 1 to 27 (MVPKLFTSQICLLLLLGLMGVEGSLHA). Trp-34 is a glycosylation site (C-linked (Man) tryptophan). The active-site Proton acceptor is His-42. N-linked (GlcNAc...) asparagine glycosylation occurs at Asn-44. 4 disulfides stabilise this stretch: Cys-50–Cys-110, Cys-64–Cys-123, Cys-82–Cys-138, and Cys-89–Cys-98. At Tyr-60 the chain carries 3'-nitrotyrosine. 65 to 69 (KNQNT) lines the substrate pocket. Residues Asn-86, Asn-92, Asn-111, and Asn-119 are each glycosylated (N-linked (GlcNAc...) asparagine). His-156 serves as the catalytic Proton donor.

Belongs to the pancreatic ribonuclease family. Interacts with and forms a tight 1:1 complex with RNH1. Dimerization of two such complexes may occur.

It is found in the lysosome. It localises to the cytoplasmic granule. It carries out the reaction an [RNA] containing cytidine + H2O = an [RNA]-3'-cytidine-3'-phosphate + a 5'-hydroxy-ribonucleotide-3'-[RNA].. It catalyses the reaction an [RNA] containing uridine + H2O = an [RNA]-3'-uridine-3'-phosphate + a 5'-hydroxy-ribonucleotide-3'-[RNA].. This is a non-secretory ribonuclease. It is a pyrimidine specific nuclease with a slight preference for U. Cytotoxin and helminthotoxin. Possesses a wide variety of biological activities. The protein is Non-secretory ribonuclease (RNASE2) of Nomascus leucogenys (Northern white-cheeked gibbon).